The sequence spans 223 residues: Putative protein phosphatase 2C 63 (223 aa).

The tract at residues 1 to 22 (MASSQQAVRETGRGRASSSSAG) is disordered. Residues 1 to 212 (MASSQQAVRE…RNFHVHSSHV (212 aa)) enclose the PPM-type phosphatase domain.

The protein belongs to the PP2C family.

The catalysed reaction is O-phospho-L-seryl-[protein] + H2O = L-seryl-[protein] + phosphate. The enzyme catalyses O-phospho-L-threonyl-[protein] + H2O = L-threonyl-[protein] + phosphate. The polypeptide is Putative protein phosphatase 2C 63 (Oryza sativa subsp. japonica (Rice)).